A 364-amino-acid chain; its full sequence is E3 ubiquitin-protein ligase rnf146 (364 aa).

A disordered region spans residues 18 to 37 (KKVSGEAVPEGSGSPSSPSL). The span at 22–34 (GEAVPEGSGSPSS) shows a compositional bias: low complexity. The RING-type zinc finger occupies 42-80 (CPICLQSCVHPVRLPCRHIFCFLCVKGASWHSKRCALCR). In terms of domain architecture, WWE spans 102 to 178 (SATGGCGTGS…EHGRRRRMKR (77 aa)). 7 residues coordinate a glycoprotein: Tyr-118, Arg-121, Trp-125, Tyr-155, Gln-164, Arg-174, and Lys-186. 2 disordered regions span residues 217-262 (AAAE…PASS) and 279-364 (NEQE…VTKV). Composition is skewed to acidic residues over residues 281 to 295 (QEPE…DDSA) and 308 to 322 (TSDD…DENE).

The protein resides in the cytoplasm. The protein localises to the cytosol. It localises to the nucleus. The enzyme catalyses S-ubiquitinyl-[E2 ubiquitin-conjugating enzyme]-L-cysteine + [acceptor protein]-L-lysine = [E2 ubiquitin-conjugating enzyme]-L-cysteine + N(6)-ubiquitinyl-[acceptor protein]-L-lysine.. It functions in the pathway protein modification; protein ubiquitination. E3 ubiquitin-protein ligase that specifically binds poly-ADP-ribosylated proteins and mediates their ubiquitination and subsequent degradation. May regulate many important biological processes, such as cell survival and DNA damage response. Acts as an activator of the Wnt signaling pathway by mediating the ubiquitination of poly-ADP-ribosylated proteins. Neuroprotective protein. Protects against cell death induced by DNA damaging agents and rescues cells from G1 arrest. Promotes cell survival after gamma-irradiation. Facilitates DNA repair. This is E3 ubiquitin-protein ligase rnf146 (rnf146) from Danio rerio (Zebrafish).